Reading from the N-terminus, the 6269-residue chain is Nonribosomal peptide synthetase 1 (6269 aa).

Residues 249 to 781 (ENDWSRVCSF…VSGKLDRKSI (533 aa)) form an adenylation 1 region. The 77-residue stretch at 803–879 (RAANSTEDQL…ELATRVKGVT (77 aa)) folds into the Carrier 1 domain. At Ser840 the chain carries O-(pantetheine 4'-phosphoryl)serine. Residues 894–1342 (LSPIQKLHFM…TLSDFPMLSL (449 aa)) are epimerase 1. Residues 1373 to 1775 (SRMQQGILLS…FLQSLENIIH (403 aa)) are condensation 1. The segment at 1725 to 2333 (HDPAEFPVYV…TGLLDRWFLR (609 aa)) is adenylation 2. The disordered stretch occupies residues 2364–2386 (KPSPSQLLPSSTSATHRSSGTST). Over residues 2367-2376 (PSQLLPSSTS) the composition is skewed to low complexity. Over residues 2377-2386 (ATHRSSGTST) the composition is skewed to polar residues. Residues 2597–2670 (WRKYLADVES…TGSEEVCYGY (74 aa)) are condensation 2. The tract at residues 2845–3368 (RCAHEIIEQQ…SGKLDRKKLR (524 aa)) is adenylation 3. The Carrier 2 domain occupies 3392–3468 (ASDEGVEGTL…NMAKRCGMLQ (77 aa)). Ser3429 carries the post-translational modification O-(pantetheine 4'-phosphoryl)serine. The interval 3512-3898 (CSPVQEGLLT…GQFSFVLEQL (387 aa)) is condensation 3. The interval 3919–4454 (DSKEVALWNK…VSGKLDRKKI (536 aa)) is adenylation 4. The 77-residue stretch at 4487 to 4563 (EDKSTAAKIL…ELIQAAEVET (77 aa)) folds into the Carrier 3 domain. At Ser4524 the chain carries O-(pantetheine 4'-phosphoryl)serine. The interval 4578–5024 (LSPIQNLYFK…DFPLLPITYD (447 aa)) is epimerase 2. A condensation 4 region spans residues 5052–5466 (SSVQEGILLS…PSQLVSELDL (415 aa)). The Carrier 4 domain maps to 5552-5628 (SKLMEPEKRL…DMLAAISASN (77 aa)). Ser5589 carries the O-(pantetheine 4'-phosphoryl)serine modification. Positions 5628-5658 (NSSSALEPDSPADSNNEKPAEPPRLVELERN) are disordered. A compositionally biased stretch (basic and acidic residues) spans 5642 to 5657 (NNEKPAEPPRLVELER). The segment at 5720-6067 (FFFDGRGSLD…SSSDGKLGVS (348 aa)) is condensation 5. Positions 6139-6220 (SDILVHSDVV…GQMAVLTLHN (82 aa)) constitute a Carrier 5 domain.

It belongs to the NRP synthetase family. Post-translationally, the thiolation domains are 4'-phosphopantetheinylated.

Nonribosomal peptide synthesis (NRPS) is a key mechanism responsible for the biosynthesis of bioactive metabolites which are potentially contributing to organismal virulence. Contributes to improved fungal tolerance against oxidative stress, during the infection process. The protein is Nonribosomal peptide synthetase 1 (NRPS1) of Aspergillus fumigatus (strain ATCC MYA-4609 / CBS 101355 / FGSC A1100 / Af293) (Neosartorya fumigata).